Reading from the N-terminus, the 372-residue chain is Serine/threonine-protein kinase 17B (372 aa).

Positions 33-293 constitute a Protein kinase domain; sequence TLTPKELGRG…AESCLSHSWL (261 aa). ATP-binding positions include 39-47 and Lys62; that span reads LGRGKFAVV. Asp158 functions as the Proton acceptor in the catalytic mechanism. The disordered stretch occupies residues 305–348; that stretch reads EETSGSSQIQDLTLRSSEEKTSKSSCNGSCGAREDKENIPEDGS. The span at 307–319 shows a compositional bias: polar residues; the sequence is TSGSSQIQDLTLR.

The protein belongs to the protein kinase superfamily. CAMK Ser/Thr protein kinase family. DAP kinase subfamily. Interacts with CHP1; the interaction induces CHP1 to translocate from the Golgi to the nucleus. Autophosphorylated.

Its subcellular location is the nucleus. It localises to the cell membrane. The protein resides in the endoplasmic reticulum-Golgi intermediate compartment. The catalysed reaction is L-seryl-[protein] + ATP = O-phospho-L-seryl-[protein] + ADP + H(+). It carries out the reaction L-threonyl-[protein] + ATP = O-phospho-L-threonyl-[protein] + ADP + H(+). In terms of biological role, acts as a positive regulator of apoptosis. Phosphorylates myosin light chains. The sequence is that of Serine/threonine-protein kinase 17B (Stk17b) from Mus musculus (Mouse).